A 121-amino-acid polypeptide reads, in one-letter code: Large ribosomal subunit protein uL18 (121 aa).

Belongs to the universal ribosomal protein uL18 family. Part of the 50S ribosomal subunit; part of the 5S rRNA/L5/L18/L25 subcomplex. Contacts the 5S and 23S rRNAs.

Its function is as follows. This is one of the proteins that bind and probably mediate the attachment of the 5S RNA into the large ribosomal subunit, where it forms part of the central protuberance. This Pelobacter propionicus (strain DSM 2379 / NBRC 103807 / OttBd1) protein is Large ribosomal subunit protein uL18.